Reading from the N-terminus, the 182-residue chain is Testis-expressed protein 29 (182 aa).

Over 1-56 (MRYTTDIKKSPPQLLKTFAVCDISLYDICDYNVTRDQCKELGCCFYKGVCYKKVVP) the chain is Extracellular. Residues 57 to 77 (IYVQMFSTLIVLVTGIIIITI) traverse the membrane as a helical segment. The Cytoplasmic segment spans residues 78–182 (IYRIVQEIKR…PPTDPSENPP (105 aa)). Residues 91–182 (LSMNSTPKAS…PPTDPSENPP (92 aa)) form a disordered region. Positions 115–170 (RAPSRSPSRTSSTLSSRSPTTAPTTAPTTDPATDPATDPATDPATDPATDPATDPA) are enriched in low complexity. A compositionally biased stretch (pro residues) spans 171–182 (TAPPTDPSENPP).

The protein resides in the membrane. The chain is Testis-expressed protein 29 (Tex29) from Rattus norvegicus (Rat).